Consider the following 353-residue polypeptide: uncharacterized protein (353 aa).

An N-terminal signal peptide occupies residues 1 to 23 (MSAGKGLLLVICLLFLPLKSAMA).

The protein to E.coli YqiI.

Functionally, may be involved in a fimbrial system chaperoned by YbgP and exported by YbgQ. This is an uncharacterized protein from Escherichia coli (strain K12).